The chain runs to 205 residues: MSDGRGNLELDVSRETLERLMVFSEVLKKWNPKINLVSRKSIDDLWTRHILDSIQVFDAAPEGGAWLDIGSGGGLPGIIVAILAAEKSPDTRITLMESDLRKCAFLRNAARECGVSVTVKSKRIESAPEENCDVLSARALADLDNLLGFAERHLAENGTAMFPKGANWKKEVDNARKRWRFECDEITSVTEPGAVILKIKGVERV.

S-adenosyl-L-methionine is bound by residues Gly70, Leu75, 124–125, and Arg138; that span reads IE.

This sequence belongs to the methyltransferase superfamily. RNA methyltransferase RsmG family.

The protein localises to the cytoplasm. It catalyses the reaction guanosine(527) in 16S rRNA + S-adenosyl-L-methionine = N(7)-methylguanosine(527) in 16S rRNA + S-adenosyl-L-homocysteine. Functionally, specifically methylates the N7 position of guanine in position 527 of 16S rRNA. In Ruegeria sp. (strain TM1040) (Silicibacter sp.), this protein is Ribosomal RNA small subunit methyltransferase G.